Consider the following 293-residue polypeptide: Ribosomal protein L11 methyltransferase (293 aa).

Residues Thr146, Gly167, Asp189, and Asn230 each contribute to the S-adenosyl-L-methionine site.

Belongs to the methyltransferase superfamily. PrmA family.

The protein localises to the cytoplasm. It carries out the reaction L-lysyl-[protein] + 3 S-adenosyl-L-methionine = N(6),N(6),N(6)-trimethyl-L-lysyl-[protein] + 3 S-adenosyl-L-homocysteine + 3 H(+). Functionally, methylates ribosomal protein L11. This Colwellia psychrerythraea (strain 34H / ATCC BAA-681) (Vibrio psychroerythus) protein is Ribosomal protein L11 methyltransferase.